A 201-amino-acid chain; its full sequence is Probable GTP-binding protein EngB (201 aa).

Residues 22–197 (TFPEYAFIGR…LNYIESINKE (176 aa)) form the EngB-type G domain. GTP-binding positions include 30–37 (GRSNVGKS), 57–61 (GKTML), 75–78 (DLPG), 142–145 (TKAD), and 175–178 (ITSS). Residues Ser-37 and Thr-59 each contribute to the Mg(2+) site.

It belongs to the TRAFAC class TrmE-Era-EngA-EngB-Septin-like GTPase superfamily. EngB GTPase family. Requires Mg(2+) as cofactor.

In terms of biological role, necessary for normal cell division and for the maintenance of normal septation. The protein is Probable GTP-binding protein EngB of Bacteroides fragilis (strain ATCC 25285 / DSM 2151 / CCUG 4856 / JCM 11019 / LMG 10263 / NCTC 9343 / Onslow / VPI 2553 / EN-2).